Consider the following 959-residue polypeptide: Translation initiation factor IF-2 (959 aa).

Over residues 1 to 10 the composition is skewed to basic and acidic residues; the sequence is MSDKTNDDKT. The interval 1-374 is disordered; sequence MSDKTNDDKT…SQMQETREKI (374 aa). A compositionally biased stretch (polar residues) spans 27–37; the sequence is EQSTVRQNFSH. Composition is skewed to low complexity over residues 63–118 and 128–138; these read AAAA…VTKP and QRPGGQQAQRP. Composition is skewed to basic and acidic residues over residues 154–225 and 232–241; these read SEMD…EAAK and ARSERRDDAR. Residues 246-284 show a composition bias toward low complexity; that stretch reads GARPQQAGRPQGGRPQPAGRPQQGSPRPAPIIADAAPIA. The span at 318-333 shows a compositional bias: basic and acidic residues; the sequence is PEVRAPKVVKGEDDRR. The 170-residue stretch at 457-626 folds into the tr-type G domain; sequence SRPPVVTIMG…LLQAEMLDLK (170 aa). The G1 stretch occupies residues 466–473; that stretch reads GHVDHGKT. 466-473 provides a ligand contact to GTP; that stretch reads GHVDHGKT. Positions 491-495 are G2; sequence GITQH. The tract at residues 512–515 is G3; sequence DTPG. GTP-binding positions include 512-516 and 566-569; these read DTPGH and NKID. The tract at residues 566-569 is G4; it reads NKID. A G5 region spans residues 602 to 604; the sequence is SAK.

This sequence belongs to the TRAFAC class translation factor GTPase superfamily. Classic translation factor GTPase family. IF-2 subfamily.

Its subcellular location is the cytoplasm. One of the essential components for the initiation of protein synthesis. Protects formylmethionyl-tRNA from spontaneous hydrolysis and promotes its binding to the 30S ribosomal subunits. Also involved in the hydrolysis of GTP during the formation of the 70S ribosomal complex. This Brucella suis biovar 1 (strain 1330) protein is Translation initiation factor IF-2.